We begin with the raw amino-acid sequence, 146 residues long: D-aminoacyl-tRNA deacylase (146 aa).

A Gly-cisPro motif, important for rejection of L-amino acids motif is present at residues 137 to 138 (GP).

Belongs to the DTD family. As to quaternary structure, homodimer.

Its subcellular location is the cytoplasm. The enzyme catalyses glycyl-tRNA(Ala) + H2O = tRNA(Ala) + glycine + H(+). It catalyses the reaction a D-aminoacyl-tRNA + H2O = a tRNA + a D-alpha-amino acid + H(+). In terms of biological role, an aminoacyl-tRNA editing enzyme that deacylates mischarged D-aminoacyl-tRNAs. Also deacylates mischarged glycyl-tRNA(Ala), protecting cells against glycine mischarging by AlaRS. Acts via tRNA-based rather than protein-based catalysis; rejects L-amino acids rather than detecting D-amino acids in the active site. By recycling D-aminoacyl-tRNA to D-amino acids and free tRNA molecules, this enzyme counteracts the toxicity associated with the formation of D-aminoacyl-tRNA entities in vivo and helps enforce protein L-homochirality. This Deinococcus deserti (strain DSM 17065 / CIP 109153 / LMG 22923 / VCD115) protein is D-aminoacyl-tRNA deacylase.